A 200-amino-acid polypeptide reads, in one-letter code: 3-isopropylmalate dehydratase small subunit (200 aa).

This sequence belongs to the LeuD family. LeuD type 1 subfamily. In terms of assembly, heterodimer of LeuC and LeuD.

The enzyme catalyses (2R,3S)-3-isopropylmalate = (2S)-2-isopropylmalate. Its pathway is amino-acid biosynthesis; L-leucine biosynthesis; L-leucine from 3-methyl-2-oxobutanoate: step 2/4. In terms of biological role, catalyzes the isomerization between 2-isopropylmalate and 3-isopropylmalate, via the formation of 2-isopropylmaleate. This Aliivibrio fischeri (strain ATCC 700601 / ES114) (Vibrio fischeri) protein is 3-isopropylmalate dehydratase small subunit.